Here is a 564-residue protein sequence, read N- to C-terminus: O-fucosyltransferase 6 (564 aa).

A helical; Signal-anchor for type II membrane protein membrane pass occupies residues 17-37; sequence LLPFICAVSGALLILFALLSI. N-linked (GlcNAc...) asparagine glycans are attached at residues Asn-95 and Asn-139. A substrate-binding site is contributed by 277–279; the sequence is HLR. N-linked (GlcNAc...) asparagine glycosylation occurs at Asn-449. Residues 501 to 512 are compositionally biased toward basic and acidic residues; sequence MDSRKFGKKEQK. A disordered region spans residues 501 to 542; sequence MDSRKFGKKEQKEDEDAELSSSETDYEEDQTDLQDRGLYNGT. Acidic residues predominate over residues 513–532; that stretch reads EDEDAELSSSETDYEEDQTD. Asn-540 carries N-linked (GlcNAc...) asparagine glycosylation.

It belongs to the glycosyltransferase GT106 family.

The protein localises to the membrane. The protein operates within glycan metabolism. This is O-fucosyltransferase 6 from Arabidopsis thaliana (Mouse-ear cress).